We begin with the raw amino-acid sequence, 321 residues long: MQGGREVGRESVSDLAEELGEGSLHPTAGGQSGDSLERRRIGYDGPVILPDANANSSRLDEGLSSSRPHPGELGGGWGEFEGFQESSAKSEEFSQSFELLGRAAECQPLRTPSTPKEGGSCQVQQGGPWVTGTAAGPSSESILSYEKVFRLAFQEVPVEQATEDVCSLDRFLETGSEETAPVPRLCSESRKLWRALQNTDTVSASRCLWSESHCRENLFPVLGIDAAQKSLSGDQGHDLEGSDCRKPEDLLGVSGFHLHHCKALIQTKLSGTSGSRQGSLITYSLFLKTPLQGNGRYITIPQKKIFTPRNLKMAFFNNNVC.

Positions 1–12 (MQGGREVGRESV) are enriched in basic and acidic residues. Residues 1–85 (MQGGREVGRE…GWGEFEGFQE (85 aa)) form a disordered region. Residues 53–67 (NANSSRLDEGLSSSR) are compositionally biased toward polar residues.

This is an uncharacterized protein from Rattus norvegicus (Rat).